The sequence spans 209 residues: Ribosomal RNA small subunit methyltransferase G (209 aa).

S-adenosyl-L-methionine is bound by residues G72, L77, 123–124, and R138; that span reads AE.

This sequence belongs to the methyltransferase superfamily. RNA methyltransferase RsmG family.

It localises to the cytoplasm. Specifically methylates the N7 position of guanine in position 518 of 16S rRNA. In Leifsonia xyli subsp. xyli (strain CTCB07), this protein is Ribosomal RNA small subunit methyltransferase G.